The sequence spans 573 residues: L-lactate dehydrogenase (cytochrome) (573 aa).

The N-terminal 73 residues, Met1–Ala73, are a transit peptide targeting the mitochondrion. A Cytochrome b5 heme-binding domain is found at Asp80–Val157. Positions 115, 138, and 208 each coordinate heme b. The FMN hydroxy acid dehydrogenase domain occupies Pro182–Ile542. Tyr208 contacts pyruvate. Residues Ser260 to Ala263, Ser290, and Gln313 contribute to the FMN site. Tyr315 lines the pyruvate pocket. Thr341 lines the FMN pocket. Residue Lys357 participates in heme b binding. An FMN-binding site is contributed by Lys408. Pyruvate contacts are provided by His432 and Arg435. Residues Asp468–Arg472 and Gly491–Arg492 contribute to the FMN site.

The protein in the N-terminal section; belongs to the cytochrome b5 family. This sequence in the C-terminal section; belongs to the FMN-dependent alpha-hydroxy acid dehydrogenase family. Homotetramer. FMN serves as cofactor. It depends on heme b as a cofactor.

The protein resides in the mitochondrion intermembrane space. It catalyses the reaction (S)-lactate + 2 Fe(III)-[cytochrome c] = 2 Fe(II)-[cytochrome c] + pyruvate + 2 H(+). Functionally, catalyzes the oxidation of (S)-lactate (L-lactate) to pyruvate with subsequent transfer of electrons to cytochrome c. Is involved in the utilization of (S)-lactate as a sole source of carbon for growth. This Wickerhamomyces anomalus (Yeast) protein is L-lactate dehydrogenase (cytochrome) (CYB2).